A 303-amino-acid chain; its full sequence is D-alanine--D-alanine ligase (303 aa).

The 197-residue stretch at 104–300 (KLLWNAVGLP…FEKLVERVLE (197 aa)) folds into the ATP-grasp domain. Position 132-187 (132-187 (IAKLSLPVFVKPSSEGSSVGVFKVKTKEELLPAITAALEFDTIVLVEEFLTGAEYS)) interacts with ATP. Residues aspartate 254, glutamate 267, and asparagine 269 each coordinate Mg(2+).

It belongs to the D-alanine--D-alanine ligase family. Mg(2+) is required as a cofactor. It depends on Mn(2+) as a cofactor.

The protein resides in the cytoplasm. It carries out the reaction 2 D-alanine + ATP = D-alanyl-D-alanine + ADP + phosphate + H(+). It functions in the pathway cell wall biogenesis; peptidoglycan biosynthesis. Functionally, cell wall formation. In Haemophilus ducreyi (strain 35000HP / ATCC 700724), this protein is D-alanine--D-alanine ligase.